Here is a 265-residue protein sequence, read N- to C-terminus: Glutamate racemase (265 aa).

Residues 10-11 and 42-43 contribute to the substrate site; these read DS and YG. C73 serves as the catalytic Proton donor/acceptor. 74-75 provides a ligand contact to substrate; that stretch reads NT. The Proton donor/acceptor role is filled by C180. 181–182 is a substrate binding site; it reads TH.

It belongs to the aspartate/glutamate racemases family.

It carries out the reaction L-glutamate = D-glutamate. Its pathway is cell wall biogenesis; peptidoglycan biosynthesis. Its function is as follows. Provides the (R)-glutamate required for cell wall biosynthesis. The protein is Glutamate racemase of Synechococcus sp. (strain CC9605).